The following is a 159-amino-acid chain: 3-hydroxyacyl-[acyl-carrier-protein] dehydratase FabZ (159 aa).

Residue His65 is part of the active site.

The protein belongs to the thioester dehydratase family. FabZ subfamily.

It localises to the cytoplasm. The catalysed reaction is a (3R)-hydroxyacyl-[ACP] = a (2E)-enoyl-[ACP] + H2O. Involved in unsaturated fatty acids biosynthesis. Catalyzes the dehydration of short chain beta-hydroxyacyl-ACPs and long chain saturated and unsaturated beta-hydroxyacyl-ACPs. The protein is 3-hydroxyacyl-[acyl-carrier-protein] dehydratase FabZ of Microcystis aeruginosa (strain NIES-843 / IAM M-2473).